The chain runs to 182 residues: Pyruvoyl-dependent arginine decarboxylase (182 aa).

Ser-44 carries the pyruvic acid (Ser) modification.

It belongs to the PdaD family. The cofactor is pyruvate.

The catalysed reaction is L-arginine + H(+) = agmatine + CO2. The sequence is that of Pyruvoyl-dependent arginine decarboxylase from Thermoplasma volcanium (strain ATCC 51530 / DSM 4299 / JCM 9571 / NBRC 15438 / GSS1).